The chain runs to 753 residues: Polyribonucleotide nucleotidyltransferase (753 aa).

Residues Asp543 and Asp549 each contribute to the Mg(2+) site. The KH domain maps to 609–668 (PRITTVKIPVAKIGELIGPKGKNINALTEETGANISIEDDGTVFISAADGASAEAAIEKI). The 70-residue stretch at 680–749 (GERFLGTVVK…NRGKISLVPV (70 aa)) folds into the S1 motif domain.

It belongs to the polyribonucleotide nucleotidyltransferase family. It depends on Mg(2+) as a cofactor.

The protein resides in the cytoplasm. It carries out the reaction RNA(n+1) + phosphate = RNA(n) + a ribonucleoside 5'-diphosphate. Its function is as follows. Involved in mRNA degradation. Catalyzes the phosphorolysis of single-stranded polyribonucleotides processively in the 3'- to 5'-direction. In Corynebacterium glutamicum (strain ATCC 13032 / DSM 20300 / JCM 1318 / BCRC 11384 / CCUG 27702 / LMG 3730 / NBRC 12168 / NCIMB 10025 / NRRL B-2784 / 534), this protein is Polyribonucleotide nucleotidyltransferase.